A 194-amino-acid polypeptide reads, in one-letter code: FMN-dependent NADH:quinone oxidoreductase (194 aa).

FMN is bound by residues Ser9, 15 to 17 (SIS), and 85 to 88 (MYNF).

Belongs to the azoreductase type 1 family. As to quaternary structure, homodimer. It depends on FMN as a cofactor.

The catalysed reaction is 2 a quinone + NADH + H(+) = 2 a 1,4-benzosemiquinone + NAD(+). The enzyme catalyses N,N-dimethyl-1,4-phenylenediamine + anthranilate + 2 NAD(+) = 2-(4-dimethylaminophenyl)diazenylbenzoate + 2 NADH + 2 H(+). Quinone reductase that provides resistance to thiol-specific stress caused by electrophilic quinones. Its function is as follows. Also exhibits azoreductase activity. Catalyzes the reductive cleavage of the azo bond in aromatic azo compounds to the corresponding amines. In Xanthomonas oryzae pv. oryzae (strain KACC10331 / KXO85), this protein is FMN-dependent NADH:quinone oxidoreductase.